The following is a 2588-amino-acid chain: uncharacterized protein (2588 aa).

The span at 1–11 shows a compositional bias: basic and acidic residues; that stretch reads MSFKNNEKYMD. 9 disordered regions span residues 1 to 56, 442 to 598, 774 to 801, 1303 to 1357, 1631 to 1662, 1685 to 1705, 1820 to 1856, 2317 to 2342, and 2415 to 2437; these read MSFK…NISN, ELES…HFSN, KKEK…NNNI, DSHD…KKKY, QNSN…HHQN, NNNN…KDQP, KLNV…EEND, KKKK…DNIN, and YDNN…NSHT. The span at 42–56 shows a compositional bias: low complexity; that stretch reads NNNNNNNNNNSNISN. A coiled-coil region spans residues 413–452; that stretch reads YREIEENEKVMEMQRRENELLEEKKRLKQELESYHDDSST. Acidic residues predominate over residues 451–462; the sequence is STDDDSSADEQQ. Basic and acidic residues-rich tracts occupy residues 463–515 and 522–588; these read DERR…KNDD and DHTH…DHTH. Over residues 785 to 801 the composition is skewed to low complexity; it reads DNNNNNNNNNNNDNNNI. Over residues 1308–1318 the composition is skewed to acidic residues; that stretch reads NNDDSVNDSND. Over residues 1319-1331 the composition is skewed to low complexity; it reads DTNNVNVNVNVND. Residues 1347–1356 show a composition bias toward basic residues; sequence DKKKKHKKKK. Polar residues predominate over residues 1631–1643; that stretch reads QNSNNKSNDSLKM. Residues 1685–1698 are compositionally biased toward low complexity; the sequence is NNNNNNNNNNNNND. The span at 1828 to 1838 shows a compositional bias: basic and acidic residues; the sequence is QGERQDERNID. Positions 1839-1856 are enriched in acidic residues; the sequence is HEDEPVSSNTEDDHEEND. The segment covering 2416–2434 has biased composition (low complexity); that stretch reads DNNNNNDNNNDNNNDNNNN.

This is an uncharacterized protein from Plasmodium falciparum (isolate 3D7).